The chain runs to 216 residues: Ras-related protein Rab-11A (216 aa).

Residue Gly2 is modified to N-acetylglycine. GTP contacts are provided by Ser20, Gly21, Val22, Gly23, Lys24, Ser25, Asn26, Asn37, Leu38, Ser40, Ser42, and Thr43. Ser25 lines the Mg(2+) pocket. The Switch 1 signature appears at 36–47 (FNLESKSTIGVE). Mg(2+)-binding residues include Thr43 and Asp66. Residues 67-86 (TAGQERYRAITSAYYRGAVG) carry the Switch 2 motif. Residues Gly69, Asn124, Lys125, Asp127, Ala155, and Leu156 each contribute to the GTP site. The disordered stretch occupies residues 183-207 (DRRENDMSPSNNVVPIHVPPTTENK). S-geranylgeranyl cysteine attachment occurs at residues Cys212 and Cys213. Cys213 is modified (cysteine methyl ester). Residues 214-216 (QNI) constitute a propeptide, removed in mature form.

It belongs to the small GTPase superfamily. Rab family. As to quaternary structure, interacts (GTP-bound form) with RAB11FIPs (via their C-termini) including RAB11FIP1, RAB11FIP2, RAB11FIP3, RAB11FIP4 and RAB11FIP5 effectors. Forms a complex with RAB11FIP3 and dynein intermediate chain DYNC1LI1; the interaction between RAB11A1 and RAB11FIP3 is direct; the complex regulates endocytic trafficking. Interacts with EVI5; EVI5 and RAB11FIP3 may be mutually exclusive and compete for binding RAB11A. Interacts with SGSM1, SGSM2, SGSM3 and VIPAS39. Interacts with EXOC6 in a GTP-dependent manner. Interacts with RAB11FIP5. Interacts with STXBP6. Interacts (GDP-bound form) with ZFYVE27. Interacts with BIRC6/bruce. May interact with TBC1D14. Interacts with UNC119; in a cell cycle-dependent manner. GDP-bound and nucleotide-free forms interact with SH3BP5. Interacts (GDP-bound form) with KIF5A in a ZFYVE27-dependent manner. Interacts (GDP-bound form) with RELCH. Found in a complex composed of RELCH, OSBP1 and RAB11A. Interacts with TBC1D12. Interacts with DEF6. Interacts with ATP9A. Forms a heterotetramer with RAB11FIP3; the GTP-bound form is preferred for binding. Forms a complex with Rabin8/RAB3IP and RAB11FIP3, probably a heterohexamer with two of each protein subunit, where Rabin8/RAB3IP and RAB11FIP3 simultaneously bind to RAB11A; the complex promotes preciliary trafficking and cilia growth. Forms a complex containing RAB11A, ASAP1, Rabin8/RAB3IP, RAP11FIP3 and ARF4; the complex promotes preciliary trafficking; the complex binds to RHO in photoreceptor cells and promotes RHO ciliary transport. Interacts (GTP-bound form) with WDR44; the interaction prevents RAB11A-RAB3IP-RAB11FIP3 complex formation. Mg(2+) serves as cofactor.

The protein localises to the cell membrane. The protein resides in the endosome membrane. It localises to the recycling endosome membrane. It is found in the cleavage furrow. Its subcellular location is the cytoplasmic vesicle. The protein localises to the phagosome. The protein resides in the cytoplasmic vesicle membrane. It localises to the golgi apparatus. It is found in the trans-Golgi network. The enzyme catalyses GTP + H2O = GDP + phosphate + H(+). Regulated by guanine nucleotide exchange factors (GEFs) which promote the exchange of bound GDP for free GTP. Regulated by GTPase activating proteins (GAPs) which increase the GTP hydrolysis activity. Inhibited by GDP dissociation inhibitors (GDIs) which prevent Rab-GDP dissociation. In terms of biological role, the small GTPases Rab are key regulators of intracellular membrane trafficking, from the formation of transport vesicles to their fusion with membranes. Rabs cycle between an inactive GDP-bound form and an active GTP-bound form that is able to recruit to membranes different set of downstream effectors directly responsible for vesicle formation, movement, tethering and fusion. The small Rab GTPase RAB11A regulates endocytic recycling. Forms a functional Rab11/RAB11FIP3/dynein complex that regulates the movement of peripheral sorting endosomes (SE) along microtubule tracks toward the microtubule organizing center/centrosome, generating the endosomal recycling compartment (ERC). Acts as a major regulator of membrane delivery during cytokinesis. Together with MYO5B and RAB8A participates in epithelial cell polarization. Together with Rabin8/RAB3IP, RAB8A, the exocyst complex, PARD3, PRKCI, ANXA2, CDC42 and DNMBP promotes transcytosis of PODXL to the apical membrane initiation sites (AMIS), apical surface formation and lumenogenesis. Together with MYO5B participates in CFTR trafficking to the plasma membrane and TF (Transferrin) recycling in nonpolarized cells. Required in a complex with MYO5B and RAB11FIP2 for the transport of NPC1L1 to the plasma membrane. Participates in the sorting and basolateral transport of CDH1 from the Golgi apparatus to the plasma membrane. Regulates the recycling of FCGRT (receptor of Fc region of monomeric IgG) to basolateral membranes. May also play a role in melanosome transport and release from melanocytes. Promotes Rabin8/RAB3IP preciliary vesicular trafficking to mother centriole by forming a ciliary targeting complex containing Rab11, ASAP1, Rabin8/RAB3IP, RAB11FIP3 and ARF4, thereby regulating ciliogenesis initiation. On the contrary, upon LPAR1 receptor signaling pathway activation, interaction with phosphorylated WDR44 prevents Rab11-RAB3IP-RAB11FIP3 complex formation and cilia growth. Participates in the export of a subset of neosynthesized proteins through a Rab8-Rab10-Rab11-endososomal dependent export route via interaction with WDR44. The polypeptide is Ras-related protein Rab-11A (Bos taurus (Bovine)).